The primary structure comprises 1009 residues: Helicase-like transcription factor (1009 aa).

Residue R27 is modified to Omega-N-methylarginine. A DNA-binding region spans residues 38–287 (EFQDVIPPDD…FSEKDRPENV (250 aa)). A Glycyl lysine isopeptide (Lys-Gly) (interchain with G-Cter in SUMO2) cross-link involves residue K112. Y195 is subject to Phosphotyrosine; by JAK2. A Glycyl lysine isopeptide (Lys-Gly) (interchain with G-Cter in SUMO2) cross-link involves residue K211. 294 to 301 (DDMGLGKT) serves as a coordination point for ATP. Residues 336 to 365 (DDSMKLGGNNTSEKADGLSKDASRCSEQPS) are disordered. The segment covering 348–359 (EKADGLSKDASR) has biased composition (basic and acidic residues). 3 positions are modified to phosphoserine: S397, S398, and S400. Residues 435–606 (IEDVAFACAL…WSLLSFLKLK (172 aa)) enclose the Helicase ATP-binding domain. Residues 557-560 (DEGH) carry the DEGH box motif. Phosphothreonine is present on T736. The RING-type zinc-finger motif lies at 760–801 (CAICLDSLTVPVITHCAHVFCKPCICQVIQNEQPHAKCPLCR). Positions 837-996 (ALMHALTDLR…TKKPNADEMK (160 aa)) constitute a Helicase C-terminal domain. Residues 925 to 1009 (SRVFLMDPAW…INEIRTLIDL (85 aa)) are interaction with SP1 and SP3.

Belongs to the SNF2/RAD54 helicase family. RAD16 subfamily. In terms of assembly, interacts with SP1 and SP3 independently of DNA; the interaction with these transcriptional factors may be required for basal transcription of target genes. Interacts with EGR1; the interaction requires prior binding to DNA and represses c-Rel via a DNA looping mechanism. Interacts with GATA4. Interacts with PCNA; the interaction promotes polyubiquitination of PCNA through association with the UBE2B-RAD18 and UBE2V2-UBE2N ubiquitin ligase complexes. Interacts with RAD18, SHPRH, UBE2V2 and UBE2N. Expressed in brain, heart, kidney, liver, lung, pancreas, placenta and skeletal muscle.

Its subcellular location is the cytoplasm. The protein resides in the nucleus. It localises to the nucleolus. The protein localises to the nucleoplasm. The catalysed reaction is S-ubiquitinyl-[E2 ubiquitin-conjugating enzyme]-L-cysteine + [acceptor protein]-L-lysine = [E2 ubiquitin-conjugating enzyme]-L-cysteine + N(6)-ubiquitinyl-[acceptor protein]-L-lysine.. It functions in the pathway protein modification; protein ubiquitination. Functionally, has both helicase and E3 ubiquitin ligase activities. Possesses intrinsic ATP-dependent nucleosome-remodeling activity; This activity may be required for transcriptional activation or repression of specific target promoters. These may include the SERPINE1 and HIV-1 promoters and the SV40 enhancer, to which this protein can bind directly. Plays a role in error-free postreplication repair (PRR) of damaged DNA and maintains genomic stability through acting as a ubiquitin ligase for 'Lys-63'-linked polyubiquitination of chromatin-bound PCNA. The polypeptide is Helicase-like transcription factor (HLTF) (Homo sapiens (Human)).